The following is a 223-amino-acid chain: Protein-lysine N-methyltransferase CG9154 (223 aa).

Belongs to the class I-like SAM-binding methyltransferase superfamily. EFM5 family.

It localises to the cytoplasm. Its function is as follows. S-adenosyl-L-methionine-dependent protein-lysine N-methyltransferase that methylates elongation factor 1-alpha. The sequence is that of Protein-lysine N-methyltransferase CG9154 from Drosophila melanogaster (Fruit fly).